The chain runs to 448 residues: Adenylosuccinate synthetase (448 aa).

GTP-binding positions include 36-42 (GDEGKGK) and 64-66 (GHT). Aspartate 37 (proton acceptor) is an active-site residue. Mg(2+) contacts are provided by aspartate 37 and glycine 64. IMP-binding positions include 37–40 (DEGK), 62–65 (NAGH), threonine 154, arginine 168, asparagine 246, threonine 261, and arginine 325. Histidine 65 (proton donor) is an active-site residue. A substrate-binding site is contributed by 321-327 (VTTKRKR). GTP contacts are provided by residues arginine 327, 353 to 355 (KLD), and 436 to 438 (GVG).

Belongs to the adenylosuccinate synthetase family. Homodimer. Requires Mg(2+) as cofactor.

It is found in the cytoplasm. The enzyme catalyses IMP + L-aspartate + GTP = N(6)-(1,2-dicarboxyethyl)-AMP + GDP + phosphate + 2 H(+). The protein operates within purine metabolism; AMP biosynthesis via de novo pathway; AMP from IMP: step 1/2. Plays an important role in the de novo pathway and in the salvage pathway of purine nucleotide biosynthesis. Catalyzes the first committed step in the biosynthesis of AMP from IMP. The protein is Adenylosuccinate synthetase of Drosophila ananassae (Fruit fly).